Consider the following 193-residue polypeptide: NADH-quinone oxidoreductase subunit B (193 aa).

4 residues coordinate [4Fe-4S] cluster: Cys-72, Cys-73, Cys-137, and Cys-167.

The protein belongs to the complex I 20 kDa subunit family. NDH-1 is composed of 14 different subunits. Subunits NuoB, C, D, E, F, and G constitute the peripheral sector of the complex. Requires [4Fe-4S] cluster as cofactor.

Its subcellular location is the cell inner membrane. The enzyme catalyses a quinone + NADH + 5 H(+)(in) = a quinol + NAD(+) + 4 H(+)(out). In terms of biological role, NDH-1 shuttles electrons from NADH, via FMN and iron-sulfur (Fe-S) centers, to quinones in the respiratory chain. The immediate electron acceptor for the enzyme in this species is believed to be ubiquinone. Couples the redox reaction to proton translocation (for every two electrons transferred, four hydrogen ions are translocated across the cytoplasmic membrane), and thus conserves the redox energy in a proton gradient. This is NADH-quinone oxidoreductase subunit B from Bartonella bacilliformis (strain ATCC 35685 / KC583 / Herrer 020/F12,63).